Here is a 185-residue protein sequence, read N- to C-terminus: Protein FAM219A (185 aa).

Residue Met-1 is modified to N-acetylmethionine. Positions 1–131 (MMEEIDRFQV…SRYSSSGYSS (131 aa)) are disordered. Ser-47 carries the post-translational modification Phosphoserine. Residues 52–61 (KLEKQRELAR) show a composition bias toward basic and acidic residues. A compositionally biased stretch (polar residues) spans 66–80 (KNGSMGSPVNQQPKK). A phosphoserine mark is found at Ser-72 and Ser-102. Thr-113 bears the Phosphothreonine mark. 2 positions are modified to phosphoserine: Ser-115 and Ser-122. The segment covering 122 to 131 (SRYSSSGYSS) has biased composition (low complexity).

Belongs to the FAM219 family.

The protein is Protein FAM219A (FAM219A) of Homo sapiens (Human).